Here is a 463-residue protein sequence, read N- to C-terminus: Glutamate--tRNA ligase (463 aa).

The short motif at 8–18 is the 'HIGH' region element; that stretch reads PSPTGYLHIGG. The short motif at 236–240 is the 'KMSKS' region element; it reads RLSKR. ATP is bound at residue K239.

The protein belongs to the class-I aminoacyl-tRNA synthetase family. Glutamate--tRNA ligase type 1 subfamily. Monomer.

The protein resides in the cytoplasm. The enzyme catalyses tRNA(Glu) + L-glutamate + ATP = L-glutamyl-tRNA(Glu) + AMP + diphosphate. Catalyzes the attachment of glutamate to tRNA(Glu) in a two-step reaction: glutamate is first activated by ATP to form Glu-AMP and then transferred to the acceptor end of tRNA(Glu). This Nitrosomonas eutropha (strain DSM 101675 / C91 / Nm57) protein is Glutamate--tRNA ligase.